We begin with the raw amino-acid sequence, 310 residues long: Olfactory receptor 5P1 (310 aa).

Residues 1–25 (MEPGNHTAVTKFILLGLTDDPTLCV) lie on the Extracellular side of the membrane. Asn-5 carries an N-linked (GlcNAc...) asparagine glycan. A helical transmembrane segment spans residues 26-46 (IFFVFFLGIYIVTLVGNISII). Topologically, residues 47–54 (NLVRSCPQ) are cytoplasmic. Residues 55–75 (LQTPMYMFLSHLAFVDIGYST) traverse the membrane as a helical segment. The Extracellular segment spans residues 76 to 99 (SVTPIMLIGFIVHETGLPVHACEA). Cysteines 97 and 189 form a disulfide. Residues 100-120 (QLCSVVTFGTAECFLLAAMAY) form a helical membrane-spanning segment. The Cytoplasmic portion of the chain corresponds to 121–133 (DRYVAICSPLLYS). A helical membrane pass occupies residues 134–154 (THMSSQICLLLVGASYVGGCV). The Extracellular segment spans residues 155 to 196 (NAWTFTGCLLSLSFCGPNKIDHFFCDFSPLLKLSCSDVSIIG). The helical transmembrane segment at 197 to 217 (IIPSISAGSIIVVTVFVISVS) threads the bilayer. At 218 to 237 (YIYILITILKMRSTEGRHKA) the chain is on the cytoplasmic side. The chain crosses the membrane as a helical span at residues 238–258 (FSTCTSHLTAVTLYYGTITFI). The Extracellular portion of the chain corresponds to 259–271 (YVMPKSSYSTKQN). The helical transmembrane segment at 272–292 (RVVSLFYTVVIPMLNPLIYSL) threads the bilayer. Residues 293-310 (RNRDVKEALRKATLRIYS) are Cytoplasmic-facing.

Belongs to the G-protein coupled receptor 1 family.

The protein resides in the cell membrane. In terms of biological role, potential odorant receptor. The chain is Olfactory receptor 5P1 from Mus musculus (Mouse).